The sequence spans 367 residues: Voltage-gated potassium channel subunit beta-2 (367 aa).

A phosphoserine mark is found at Ser-9, Ser-14, and Ser-20. Arg-28 bears the Asymmetric dimethylarginine; alternate mark. Omega-N-methylarginine; alternate is present on Arg-28. Ser-31 bears the Phosphoserine mark. NADP(+) contacts are provided by Thr-56, Trp-57, Gln-63, and Asp-85. The active-site Proton donor/acceptor is Tyr-90. Ser-112 carries the post-translational modification Phosphoserine. Lys-124 carries the N6-acetyllysine modification. Positions 158, 188, 189, 214, 243, 244, 245, 246, 247, 248, 254, 262, 264, 323, 325, 329, 332, and 333 each coordinate NADP(+).

Belongs to the shaker potassium channel beta subunit family. As to quaternary structure, homotetramer. Interaction with tetrameric potassium channel alpha subunits gives rise to a heterooctamer. Identified in potassium channel complexes containing KCNA1, KCNA2, KCNA4, KCNA5, KCNA6, KCNAB1, KCNAB2 and KCND3. Interacts (in unphosphorylated form) with MAPRE1. Forms a ternary complex with SQSTM1 and PRKCZ. Post-translationally, phosphorylated by PRKCZ; may be regulated by incorporation in a complex composed of PRKCZ and SQSTM1. Detected in brain. Detected at basket cell terminals in cerebellum and in the juxtaparanodal region of nodes of Ranvier (at protein level). Strongest expression in brain and eye. Highest levels in brain detected in brainstem and diencephalon. Strong expression also detected in lung and heart. Moderate expression in kidney, T-lymphocytes and skeletal muscle.

Its subcellular location is the cytoplasm. The protein localises to the membrane. It is found in the cell membrane. It localises to the cell projection. The protein resides in the axon. Its subcellular location is the synapse. The protein localises to the synaptosome. It is found in the cytoskeleton. It catalyses the reaction hydroxyacetone + NADP(+) = methylglyoxal + NADPH + H(+). The enzyme catalyses (E)-4-oxonon-2-en-1-ol + NADP(+) = (E)-4-oxonon-2-enal + NADPH + H(+). Functionally, regulatory subunit of the voltage-gated potassium (Kv) Shaker channel family. Shaker channels are composed of pore-forming and potassium-conducting alpha subunits and of regulatory beta subunits. The beta-2/KCNAB2 subunit promotes potassium channel closure via a mechanism that does not involve physical obstruction of the channel pore. Promotes the inactivation of Kv1.4/KCNA4 and Kv1.5/KCNA5 alpha subunit-containing channels. Displays nicotinamide adenine dinucleotide phosphate (NADPH)-dependent aldoketoreductase activity by catalyzing the NADPH-dependent reduction of a wide range of aldehyde and ketone substrates. Substrate specificity includes methylglyoxal, 9,10-phenanthrenequinone, prostaglandin J2, 4-nitrobenzaldehyde, 4-nitroacetophenone and 4-oxo-trans-2-nonenal (in vitro, no physiological substrate identified yet). The binding of oxidized and reduced nucleotide cofactors alters Kv channel gating and may contribute to dynamic fine tuning of cell excitability. Contributes to the regulation of nerve signaling, and prevents neuronal hyperexcitability. This is Voltage-gated potassium channel subunit beta-2 from Mus musculus (Mouse).